Here is a 156-residue protein sequence, read N- to C-terminus: Cytochrome c-type biogenesis protein CcmE (156 aa).

Residues 1–16 (MNATKAPGGIKPKHQR) lie on the Cytoplasmic side of the membrane. The helical; Signal-anchor for type II membrane protein transmembrane segment at 17 to 37 (LVLLVIALVALIGAGLLAAYA) threads the bilayer. Over 38–156 (LSNQASYFYV…QAEAVVAETK (119 aa)) the chain is Periplasmic. Heme is bound by residues His131 and Tyr135.

The protein belongs to the CcmE/CycJ family.

Its subcellular location is the cell inner membrane. In terms of biological role, heme chaperone required for the biogenesis of c-type cytochromes. Transiently binds heme delivered by CcmC and transfers the heme to apo-cytochromes in a process facilitated by CcmF and CcmH. This chain is Cytochrome c-type biogenesis protein CcmE, found in Novosphingobium aromaticivorans (strain ATCC 700278 / DSM 12444 / CCUG 56034 / CIP 105152 / NBRC 16084 / F199).